The primary structure comprises 638 residues: Phenylethylamine oxidase (638 aa).

A propeptide spanning residues 1–2 is cleaved from the precursor; the sequence is MT. 296-307 provides a ligand contact to substrate; the sequence is YFDTGEYLVGQY. The active-site Proton acceptor is the Asp298. Cysteines 317 and 343 form a disulfide. Position 379–384 (379–384) interacts with substrate; that stretch reads IGNYDY. Tyr382 functions as the Schiff-base intermediate with substrate; via topaquinone in the catalytic mechanism. The residue at position 382 (Tyr382) is a 2',4',5'-topaquinone. 3 residues coordinate Cu cation: His431, His433, and His592.

This sequence belongs to the copper/topaquinone oxidase family. Homodimer. Requires Cu cation as cofactor. It depends on L-topaquinone as a cofactor. In terms of processing, topaquinone (TPQ) is generated by copper-dependent autoxidation of a specific tyrosyl residue.

The enzyme catalyses a primary methyl amine + O2 + H2O = an aldehyde + H2O2 + NH4(+). It catalyses the reaction 2-phenylethylamine + O2 + H2O = 2-phenylacetaldehyde + H2O2 + NH4(+). Its function is as follows. Catalyzes the oxidative deamination of phenylethylamine to phenylacetaldehyde with the concomitant production of hydrogen peroxide and ammonia. This is Phenylethylamine oxidase from Arthrobacter globiformis.